A 307-amino-acid polypeptide reads, in one-letter code: Oxygen-dependent coproporphyrinogen-III oxidase (307 aa).

Serine 97 contributes to the substrate binding site. Positions 101 and 111 each coordinate a divalent metal cation. The active-site Proton donor is the histidine 111. Position 113-115 (113-115 (NVR)) interacts with substrate. A divalent metal cation-binding residues include histidine 152 and histidine 182. Residues 247–282 (YVEFNLVWDRGTHFGLQSGGRTESILMSMPPLASWS) form an important for dimerization region. 265 to 267 (GGR) serves as a coordination point for substrate.

This sequence belongs to the aerobic coproporphyrinogen-III oxidase family. In terms of assembly, homodimer. A divalent metal cation serves as cofactor.

Its subcellular location is the cytoplasm. The catalysed reaction is coproporphyrinogen III + O2 + 2 H(+) = protoporphyrinogen IX + 2 CO2 + 2 H2O. It participates in porphyrin-containing compound metabolism; protoporphyrin-IX biosynthesis; protoporphyrinogen-IX from coproporphyrinogen-III (O2 route): step 1/1. Involved in the heme biosynthesis. Catalyzes the aerobic oxidative decarboxylation of propionate groups of rings A and B of coproporphyrinogen-III to yield the vinyl groups in protoporphyrinogen-IX. The polypeptide is Oxygen-dependent coproporphyrinogen-III oxidase (Polaromonas naphthalenivorans (strain CJ2)).